Reading from the N-terminus, the 503-residue chain is ATP synthase subunit alpha (503 aa).

170 to 177 (GDRQTGKT) serves as a coordination point for ATP.

The protein belongs to the ATPase alpha/beta chains family. F-type ATPases have 2 components, CF(1) - the catalytic core - and CF(0) - the membrane proton channel. CF(1) has five subunits: alpha(3), beta(3), gamma(1), delta(1), epsilon(1). CF(0) has three main subunits: a(1), b(2) and c(9-12). The alpha and beta chains form an alternating ring which encloses part of the gamma chain. CF(1) is attached to CF(0) by a central stalk formed by the gamma and epsilon chains, while a peripheral stalk is formed by the delta and b chains.

The protein resides in the cell membrane. It catalyses the reaction ATP + H2O + 4 H(+)(in) = ADP + phosphate + 5 H(+)(out). Produces ATP from ADP in the presence of a proton gradient across the membrane. The alpha chain is a regulatory subunit. The chain is ATP synthase subunit alpha from Brevibacillus brevis (strain 47 / JCM 6285 / NBRC 100599).